A 63-amino-acid chain; its full sequence is Large ribosomal subunit protein uL29 (63 aa).

Belongs to the universal ribosomal protein uL29 family.

The protein is Large ribosomal subunit protein uL29 of Klebsiella pneumoniae (strain 342).